Consider the following 407-residue polypeptide: Na(+)-translocating NADH-quinone reductase subunit F (407 aa).

Residues 6–26 (IFLAIGMFTAIVLGLVAIILV) form a helical membrane-spanning segment. The 93-residue stretch at 35–127 (GDVTIQINGE…DMQIRVPEEV (93 aa)) folds into the 2Fe-2S ferredoxin-type domain. Residues Cys70, Cys76, Cys79, and Cys111 each contribute to the [2Fe-2S] cluster site. In terms of domain architecture, FAD-binding FR-type spans 130–269 (VKKWECTVES…YGPFGEFFAK (140 aa)).

This sequence belongs to the NqrF family. As to quaternary structure, composed of six subunits; NqrA, NqrB, NqrC, NqrD, NqrE and NqrF. It depends on [2Fe-2S] cluster as a cofactor. FAD serves as cofactor.

Its subcellular location is the cell inner membrane. The catalysed reaction is a ubiquinone + n Na(+)(in) + NADH + H(+) = a ubiquinol + n Na(+)(out) + NAD(+). In terms of biological role, NQR complex catalyzes the reduction of ubiquinone-1 to ubiquinol by two successive reactions, coupled with the transport of Na(+) ions from the cytoplasm to the periplasm. The first step is catalyzed by NqrF, which accepts electrons from NADH and reduces ubiquinone-1 to ubisemiquinone by a one-electron transfer pathway. The protein is Na(+)-translocating NADH-quinone reductase subunit F of Pseudomonas aeruginosa (strain UCBPP-PA14).